Consider the following 132-residue polypeptide: Fluoride-specific ion channel FluC (132 aa).

4 helical membrane passes run 5-25, 36-56, 68-88, and 103-123; these read LVAI…LGMW, GTLA…ALFA, FVVT…AEMF, and IAVH…TFGA. Na(+) is bound by residues G75 and T78.

Belongs to the fluoride channel Fluc/FEX (TC 1.A.43) family.

Its subcellular location is the cell inner membrane. The catalysed reaction is fluoride(in) = fluoride(out). Its activity is regulated as follows. Na(+) is not transported, but it plays an essential structural role and its presence is essential for fluoride channel function. Its function is as follows. Fluoride-specific ion channel. Important for reducing fluoride concentration in the cell, thus reducing its toxicity. This Chromohalobacter salexigens (strain ATCC BAA-138 / DSM 3043 / CIP 106854 / NCIMB 13768 / 1H11) protein is Fluoride-specific ion channel FluC.